The sequence spans 378 residues: Rhodopsin (378 aa).

Residues 1 to 53 (MMSIASGPSHAAYTWASQGGGFGNQTVVDKVPPEMLHMVDAHWYQFPPMNPLW) lie on the Extracellular side of the membrane. N-linked (GlcNAc...) asparagine glycosylation occurs at asparagine 24. The chain crosses the membrane as a helical span at residues 54-78 (HALLGFVIGVLGVISVIGNGMVIYI). Topologically, residues 79–90 (FTTTKSLRTPSN) are cytoplasmic. A helical transmembrane segment spans residues 91-115 (LLVVNLAISDFLMMLCMSPAMVINC). At 116 to 130 (YYETWVLGPLFCELY) the chain is on the extracellular side. Residues cysteine 127 and cysteine 204 are joined by a disulfide bond. Residues 131–150 (GLAGSLFGCASIWTMTMIAF) form a helical membrane-spanning segment. The Cytoplasmic segment spans residues 151 to 169 (DRYNVIVKGLSAKPMTING). Residues 170–193 (ALIRILTIWFFTLAWTIAPMFGWN) traverse the membrane as a helical segment. The Extracellular segment spans residues 194 to 217 (RYVPEGNMTACGTDYLTKDLFSRS). N-linked (GlcNAc...) asparagine glycosylation is present at asparagine 200. Residues 218–245 (YILIYSIFVYFTPLFLIIYSYFFIIQAV) traverse the membrane as a helical segment. At 246–280 (AAHEKNMREQAKKMNVASLRSAENQSTSAECKLAK) the chain is on the cytoplasmic side. Residues 281–304 (VALMTISLWFMAWTPYLVINYSGI) form a helical membrane-spanning segment. At 305 to 311 (FETTKIS) the chain is on the extracellular side. Residues 312–336 (PLFTIWGSLFAKANAVYNPIVYGIS) traverse the membrane as a helical segment. N6-(retinylidene)lysine is present on lysine 323. Residues 337–378 (HPKYRAALFQKFPSLACTTEPTGADTMSTTTTVTEGNEKPAA) are Cytoplasmic-facing.

Belongs to the G-protein coupled receptor 1 family. Opsin subfamily. Phosphorylated on some or all of the serine and threonine residues present in the C-terminal region.

It is found in the membrane. In terms of biological role, visual pigments are the light-absorbing molecules that mediate vision. They consist of an apoprotein, opsin, covalently linked to cis-retinal. The polypeptide is Rhodopsin (Camponotus atriceps (Florida carpenter ant)).